The primary structure comprises 330 residues: Putative aminopeptidase (330 aa).

A divalent metal cation contacts are provided by histidine 65 and aspartate 168. The Proton acceptor role is filled by glutamate 198. A divalent metal cation-binding residues include glutamate 199, aspartate 221, and histidine 307.

The protein belongs to the peptidase M42 family. It depends on a divalent metal cation as a cofactor.

This chain is Putative aminopeptidase (celM), found in Acetivibrio thermocellus (Hungateiclostridium thermocellum).